The primary structure comprises 105 residues: Large ribosomal subunit protein eL36 (105 aa).

The residue at position 62 (Lys62) is an N6-acetyllysine.

The protein belongs to the eukaryotic ribosomal protein eL36 family. Component of the large ribosomal subunit.

The protein resides in the cytoplasm. It localises to the cytosol. In terms of biological role, component of the large ribosomal subunit. The ribosome is a large ribonucleoprotein complex responsible for the synthesis of proteins in the cell. The polypeptide is Large ribosomal subunit protein eL36 (RPL36) (Bos taurus (Bovine)).